Consider the following 260-residue polypeptide: Proliferating cell nuclear antigen (260 aa).

The DNA-binding element occupies 61 to 80 (RCDRNLAMGVNLSSMSKILK). Residue Lys-164 forms a Glycyl lysine isopeptide (Lys-Gly) (interchain with G-Cter in ubiquitin) linkage.

The protein belongs to the PCNA family. As to quaternary structure, homotrimer. Forms a complex with activator 1 heteropentamer in the presence of ATP. Component of the replisome complex. In terms of processing, monoubiquitinated by the ube2b-rad18 complex on Lys-164. Monoubiquitination at Lys-164 also takes place in undamaged proliferating cells, and is mediated by the dcx(dtl) complex, leading to enhance PCNA-dependent translesion DNA synthesis.

It is found in the nucleus. This protein is an auxiliary protein of DNA polymerase delta and is involved in the control of eukaryotic DNA replication by increasing the polymerase's processibility during elongation of the leading strand. This is Proliferating cell nuclear antigen (pcna) from Haplochromis burtoni (Burton's mouthbrooder).